The primary structure comprises 222 residues: Large ribosomal subunit protein mL64 (222 aa).

Disordered regions lie at residues 14–40 and 188–222; these read LTATLAPGSRGYRAPPPPRREPGPWWP and KRLKEEKQRQKQEARAAALAAAAAQDPAASGAPSS. Residues 144 to 213 adopt a coiled-coil conformation; that stretch reads EKAQADKERR…AALAAAAAQD (70 aa). The Nuclear localization signal signature appears at 184 to 200; the sequence is KKERKRLKEEKQRQKQE. Over residues 188-201 the composition is skewed to basic and acidic residues; sequence KRLKEEKQRQKQEA. A compositionally biased stretch (low complexity) spans 202-216; it reads RAAALAAAAAQDPAA.

Belongs to the mitochondrion-specific ribosomal protein mL64 family. Component of the mitochondrial ribosome large subunit (39S) which comprises a 16S rRNA and about 50 distinct proteins. Interacts with GADD45A, GADD45B and GADD45G. Interacts with NR4A1 via the NR4A1 AB domain. Interacts with ATAD3A and ATAD3B.

Its subcellular location is the mitochondrion. It is found in the nucleus. Its function is as follows. Acts as a negative regulator of G1 to S cell cycle phase progression by inhibiting cyclin-dependent kinases. Inhibitory effects are additive with GADD45 proteins but also occur in the absence of GADD45 proteins. Acts as a repressor of the orphan nuclear receptor NR4A1 by inhibiting AB domain-mediated transcriptional activity. May be involved in the hormone-mediated regulation of NR4A1 transcriptional activity. May play a role in mitochondrial protein synthesis. This chain is Large ribosomal subunit protein mL64 (GADD45GIP1), found in Chlorocebus aethiops (Green monkey).